The primary structure comprises 489 residues: Betaine aldehyde dehydrogenase (489 aa).

Residues T26 and D93 each coordinate K(+). 150 to 152 (GAW) contributes to the NAD(+) binding site. K162 acts as the Charge relay system in catalysis. 176–179 (KPSE) contributes to the NAD(+) binding site. I180 contacts K(+). Residue 229–232 (GVET) coordinates NAD(+). L245 contacts K(+). The active-site Proton acceptor is E251. NAD(+) contacts are provided by G253, C285, and E386. C285 (nucleophile) is an active-site residue. Cysteine sulfenic acid (-SOH) is present on C285. 2 residues coordinate K(+): K456 and G459. E463 (charge relay system) is an active-site residue.

The protein belongs to the aldehyde dehydrogenase family. In terms of assembly, dimer of dimers. K(+) serves as cofactor.

The catalysed reaction is betaine aldehyde + NAD(+) + H2O = glycine betaine + NADH + 2 H(+). It functions in the pathway amine and polyamine biosynthesis; betaine biosynthesis via choline pathway; betaine from betaine aldehyde: step 1/1. Its function is as follows. Involved in the biosynthesis of the osmoprotectant glycine betaine. Catalyzes the irreversible oxidation of betaine aldehyde to the corresponding acid. The polypeptide is Betaine aldehyde dehydrogenase (Paraburkholderia phytofirmans (strain DSM 17436 / LMG 22146 / PsJN) (Burkholderia phytofirmans)).